Here is a 620-residue protein sequence, read N- to C-terminus: 1-deoxy-D-xylulose-5-phosphate synthase (620 aa).

Residues H80 and 121-123 (GHS) contribute to the thiamine diphosphate site. D152 lines the Mg(2+) pocket. Thiamine diphosphate-binding positions include 153 to 154 (GA), N181, Y288, and E370. N181 provides a ligand contact to Mg(2+).

It belongs to the transketolase family. DXPS subfamily. As to quaternary structure, homodimer. Mg(2+) serves as cofactor. Requires thiamine diphosphate as cofactor.

The catalysed reaction is D-glyceraldehyde 3-phosphate + pyruvate + H(+) = 1-deoxy-D-xylulose 5-phosphate + CO2. It participates in metabolic intermediate biosynthesis; 1-deoxy-D-xylulose 5-phosphate biosynthesis; 1-deoxy-D-xylulose 5-phosphate from D-glyceraldehyde 3-phosphate and pyruvate: step 1/1. In terms of biological role, catalyzes the acyloin condensation reaction between C atoms 2 and 3 of pyruvate and glyceraldehyde 3-phosphate to yield 1-deoxy-D-xylulose-5-phosphate (DXP). In Escherichia coli (strain 55989 / EAEC), this protein is 1-deoxy-D-xylulose-5-phosphate synthase.